We begin with the raw amino-acid sequence, 96 residues long: Putative defensin-like protein 263 (96 aa).

The first 26 residues, 1-26, serve as a signal peptide directing secretion; the sequence is MEKTSLKLVFLFSLTVIALCLSLSAA. 4 disulfide bridges follow: Cys48/Cys96, Cys67/Cys86, Cys73/Cys91, and Cys77/Cys93.

This sequence belongs to the DEFL family.

Its subcellular location is the secreted. In Arabidopsis thaliana (Mouse-ear cress), this protein is Putative defensin-like protein 263.